A 224-amino-acid chain; its full sequence is SPI-2 type 3 secretion system stator protein (224 aa).

It belongs to the SctL stator family. The core secretion machinery of the T3SS is composed of approximately 20 different proteins, including cytoplasmic components, a base, an export apparatus and a needle. This subunit is part of the cytosolic complex. Interacts directly with SsaN/SctN2 (T3SS-2 ATPase).

It is found in the cytoplasm. Component of the type III secretion system (T3SS), also called injectisome, which is used to inject bacterial effector proteins into eukaryotic host cells. Acts as a regulator of the SsaN/SctN2 ATPase activity. In Salmonella typhimurium (strain LT2 / SGSC1412 / ATCC 700720), this protein is SPI-2 type 3 secretion system stator protein.